A 322-amino-acid polypeptide reads, in one-letter code: Reticulocalbin-1 (322 aa).

The signal sequence occupies residues 1–19; that stretch reads MDVLGFICAVFLGTVVLHA. Residue Asn-44 is glycosylated (N-linked (GlcNAc...) asparagine). EF-hand domains follow at residues 70–105, 106–141, 157–192, 194–229, 235–270, and 271–306; these read ESKD…VQKR, YVYE…YYLS, KMLP…EEFE, MKDI…HEDR, WVKT…QDYD, and HAQA…FVGS. Ca(2+)-binding residues include Asp-83, Asp-85, Asn-87, Tyr-89, Glu-94, Asp-119, Asn-121, Asp-123, Lys-125, Glu-130, Asp-170, Asp-172, Asp-174, Glu-181, Asp-207, Asn-209, Asp-211, His-213, Glu-218, Asp-248, Asn-250, Asp-252, Lys-254, Glu-259, Asp-284, Asp-286, Asp-288, Met-290, and Glu-295. The short motif at 319 to 322 is the Prevents secretion from ER element; sequence HDEL.

The protein belongs to the CREC family.

The protein resides in the endoplasmic reticulum lumen. Its function is as follows. May regulate calcium-dependent activities in the endoplasmic reticulum lumen or post-ER compartment. The protein is Reticulocalbin-1 (rcn1) of Takifugu rubripes (Japanese pufferfish).